Consider the following 300-residue polypeptide: Tyrosine recombinase XerC (300 aa).

Residues 4–90 (VALSLDVSRF…ALRSFFDWLV (87 aa)) form the Core-binding (CB) domain. The region spanning 111–290 (HLPKNIDVDD…DFQHLASVYD (180 aa)) is the Tyr recombinase domain. Residues Arg-150, Lys-174, His-242, Arg-245, and His-268 contribute to the active site. Tyr-277 serves as the catalytic O-(3'-phospho-DNA)-tyrosine intermediate.

It belongs to the 'phage' integrase family. XerC subfamily. Forms a cyclic heterotetrameric complex composed of two molecules of XerC and two molecules of XerD, in which XerC interacts with XerD via its C-terminal region, XerD interacts with XerC via its C-terminal region and so on.

It localises to the cytoplasm. FtsK may regulate the catalytic switch between XerC and XerD in the heterotetrameric complex during the two steps of the recombination process. Functionally, site-specific tyrosine recombinase, which acts by catalyzing the cutting and rejoining of the recombining DNA molecules. Binds cooperatively to specific DNA consensus sequences that are separated from XerD binding sites by a short central region, forming the heterotetrameric XerC-XerD complex that recombines DNA substrates. The complex is essential to convert dimers of the bacterial chromosome into monomers to permit their segregation at cell division. It also contributes to the segregational stability of plasmids. In the complex XerC specifically exchanges the top DNA strands. This chain is Tyrosine recombinase XerC, found in Salmonella typhi.